We begin with the raw amino-acid sequence, 537 residues long: Bifunctional NAD(P)H-hydrate repair enzyme Nnr (537 aa).

Residues 1–227 are NAD(P)H-hydrate epimerase; the sequence is MLGRPVFGLG…PPEAEVYVGP (227 aa). In terms of domain architecture, YjeF N-terminal spans 13 to 223; sequence ITSVDVAVID…SIGAPPEAEV (211 aa). The tract at residues 65 to 69 is NADPHX 1; for epimerase activity; the sequence is GNGGD. K(+)-binding residues include asparagine 66 and aspartate 135. Residues 139–145 are NADPHX 1; for epimerase activity; that stretch reads GTGLRGA. Tyrosine 150 and aspartate 168 together coordinate (6S)-NADPHX. Serine 171 serves as a coordination point for K(+). One can recognise a YjeF C-terminal domain in the interval 226-508; the sequence is GPGDVAYRVR…EKIPEALNNP (283 aa). Residues 227–537 are ADP-dependent (S)-NAD(P)H-hydrate dehydratase; the sequence is PGDVAYRVRP…WQPPVGRSES (311 aa). Glycine 329 contributes to the (6S)-NADPHX binding site. Residues 381–387 are NADPHX 2; for dehydratase activity; it reads HQREFQI. ADP is bound by residues 421-425 and 440-449; these read KGPID and VPAMSVGGTG. Aspartate 450 serves as a coordination point for (6S)-NADPHX.

This sequence in the N-terminal section; belongs to the NnrE/AIBP family. The protein in the C-terminal section; belongs to the NnrD/CARKD family. The cofactor is K(+).

It carries out the reaction (6S)-NADHX + ADP = AMP + phosphate + NADH + H(+). The catalysed reaction is (6S)-NADPHX + ADP = AMP + phosphate + NADPH + H(+). It catalyses the reaction (6R)-NADHX = (6S)-NADHX. The enzyme catalyses (6R)-NADPHX = (6S)-NADPHX. Bifunctional enzyme that catalyzes the epimerization of the S- and R-forms of NAD(P)HX and the dehydration of the S-form of NAD(P)HX at the expense of ADP, which is converted to AMP. This allows the repair of both epimers of NAD(P)HX, a damaged form of NAD(P)H that is a result of enzymatic or heat-dependent hydration. This Hyperthermus butylicus (strain DSM 5456 / JCM 9403 / PLM1-5) protein is Bifunctional NAD(P)H-hydrate repair enzyme Nnr (nnr).